Reading from the N-terminus, the 830-residue chain is MDSFRKRGRRDSESLPFESENSSLGATPLSLPPSSPPPEFSDEAAEALVEEDIEDLDGEALDVEDEEGEDLFGEGMERDYQQNLELDRYDIEELDDDNDLEELDIGARRAVDARLRRRDIELDAAAGRTKPAAFLQDEDDDLDSNLGTGFTRHRHRIYDEYSPNVGALDESGELPLESIADVKADSIAEWVTLDPVRRTIAREFKNFLLEYTDENGTSVYGNRIRTLGEVNAESLMVNYAHLGESKPILAYFLANAPAPIFRIFDRVALEATLLHYPDYERIHSDIHVRITNLPTCFTLRDLRQSHLNCLVRVSGVVTRRTGLFPQLKYIRFTCTKCGATLGPFFQDSSVEVKISFCHNCSSRGPFVINSERTVYNNYQRITLQESPGTVPSGRLPRHREVILLADLVDVAKPGEEIDVTGIYRNNFDASLNTKNGFPVFATIIEANHISQLDGSGNTDDDFSLSRLTDDEEREIRALAKSPDIHNRIIASMAPSIYGHRSIKTAIAAALFGGVPKNINGKHKIRGDINVLLLGDPGTAKSQFLKYVEKTAHRAVFATGQGASAVGLTASVRKDPITNEWTLEGGALVLADKGVCLIDEFDKMNDQDRTSIHEAMEQQSISISKAGIVTTLQARCTIIAAANPIGGRYNTTIPFNQNVELTEPILSRFDILQVVKDTVNPEIDEQLANFVVSSHIRSHPAFDPNMDVLKKVPTETGIDAKPIPQDLLRKYIHFAREKVFPRLQQMDEEKISRLYSDMRRESLATGSYPITVRHLESAIRLSEAFAKMQLSEFVRPSHIDKAIQVIIDSFVNAQKMSVKRSLSRTFAKYLI.

The disordered stretch occupies residues 1 to 45; the sequence is MDSFRKRGRRDSESLPFESENSSLGATPLSLPPSSPPPEFSDEAA. Pro residues predominate over residues 30 to 39; sequence SLPPSSPPPE. The C4-type zinc-finger motif lies at 334–360; sequence CTKCGATLGPFFQDSSVEVKISFCHNC. The 208-residue stretch at 484 to 691 folds into the MCM domain; sequence IHNRIIASMA…IDEQLANFVV (208 aa). 534 to 541 is an ATP binding site; that stretch reads GDPGTAKS. Positions 666 to 669 match the Arginine finger motif; it reads SRFD.

It belongs to the MCM family. In terms of assembly, component of the mcm2-7 complex. The complex forms a toroidal hexameric ring with the proposed subunit order mcm2-mcm6-mcm4-mcm7-mcm3-mcm5. The heterodimers of mcm4/mcm6 and mcm3/mcm5 interact with mcm2 and mcm7. Interacts with mcm10.

The protein resides in the nucleus. The enzyme catalyses ATP + H2O = ADP + phosphate + H(+). Acts as a component of the mcm2-7 complex (mcm complex) which is the putative replicative helicase essential for 'once per cell cycle' DNA replication initiation and elongation in eukaryotic cells. The active ATPase sites in the mcm2-7 ring are formed through the interaction surfaces of two neighboring subunits such that a critical structure of a conserved arginine finger motif is provided in trans relative to the ATP-binding site of the Walker A box of the adjacent subunit. The six ATPase active sites, however, are likely to contribute differentially to the complex helicase activity. Plays an important role in DNA replication. In Schizosaccharomyces pombe (strain 972 / ATCC 24843) (Fission yeast), this protein is DNA replication licensing factor mcm2 (mcm2).